The chain runs to 90 residues: Small ribosomal subunit protein bS16 (90 aa).

This sequence belongs to the bacterial ribosomal protein bS16 family. As to quaternary structure, part of the 30S ribosomal subunit.

This Bacillus subtilis (strain 168) protein is Small ribosomal subunit protein bS16.